An 83-amino-acid chain; its full sequence is UPF0512 protein I (83 aa).

Belongs to the UPF0512 family.

The sequence is that of UPF0512 protein I from Dictyostelium discoideum (Social amoeba).